The following is a 479-amino-acid chain: PRAME family member 19 (479 aa).

Residues 15-38 (QSLLRDQALAISVLDELPRELFPR) form an LRR 1 repeat. The stretch at 97-124 (RWKLQVLEMRDVDENFWTIWSGARPLSC) is one LRR 1; degenerate repeat. The stretch at 179–203 (HLCCTKVVNYSMNILNFRNILETVY) is one LRR 2; degenerate repeat. The LRR 3; degenerate repeat unit spans residues 204-230 (PDSIQVLEIWNMCWPCMVAEVSRYLSQ). The LRR 4; degenerate repeat unit spans residues 231–265 (MKNLRKLFISDGCGYLPSFESQGQLVAEFSSVFLR). LRR repeat units lie at residues 266 to 291 (LEYL…IRCL), 292 to 323 (KSPL…SQLK), 324 to 342 (QLNL…PLRA), 348 to 375 (AATL…ALSR), and 376 to 400 (CSNL…LLRH).

This sequence belongs to the PRAME family.

This chain is PRAME family member 19, found in Homo sapiens (Human).